A 78-amino-acid polypeptide reads, in one-letter code: Probable [Fe-S]-dependent transcriptional repressor (78 aa).

4 residues coordinate iron-sulfur cluster: Cys56, Cys61, Cys64, and Cys70.

The protein belongs to the FeoC family.

In terms of biological role, may function as a transcriptional regulator that controls feoABC expression. This is Probable [Fe-S]-dependent transcriptional repressor from Escherichia coli O17:K52:H18 (strain UMN026 / ExPEC).